Consider the following 227-residue polypeptide: MKFAVIVFPGSNCDVDMFHAIKDELGEEVDYVWHDTENLDEYDAILLPGGFSYGDYLRCGAISRFANAMKAVQKAAEQGKPILGVCNGFQILVESGLLPGALMRNENLKFMCRTVQLRVENNETMFTSQYEKDEVINIPIAHGEGNYYCDEETLKKLEENNQIAFRYVENPNGSVSDIAGIVNEKGNVLGMMPHPERAVDELLGGAEGLKVFQSILKQWRETYVVNA.

The Glutamine amidotransferase type-1 domain occupies 3–225; it reads FAVIVFPGSN…LKQWRETYVV (223 aa). Residue C86 is the Nucleophile of the active site. Catalysis depends on residues H194 and E196.

Part of the FGAM synthase complex composed of 1 PurL, 1 PurQ and 2 PurS subunits.

Its subcellular location is the cytoplasm. It carries out the reaction N(2)-formyl-N(1)-(5-phospho-beta-D-ribosyl)glycinamide + L-glutamine + ATP + H2O = 2-formamido-N(1)-(5-O-phospho-beta-D-ribosyl)acetamidine + L-glutamate + ADP + phosphate + H(+). The enzyme catalyses L-glutamine + H2O = L-glutamate + NH4(+). It functions in the pathway purine metabolism; IMP biosynthesis via de novo pathway; 5-amino-1-(5-phospho-D-ribosyl)imidazole from N(2)-formyl-N(1)-(5-phospho-D-ribosyl)glycinamide: step 1/2. In terms of biological role, part of the phosphoribosylformylglycinamidine synthase complex involved in the purines biosynthetic pathway. Catalyzes the ATP-dependent conversion of formylglycinamide ribonucleotide (FGAR) and glutamine to yield formylglycinamidine ribonucleotide (FGAM) and glutamate. The FGAM synthase complex is composed of three subunits. PurQ produces an ammonia molecule by converting glutamine to glutamate. PurL transfers the ammonia molecule to FGAR to form FGAM in an ATP-dependent manner. PurS interacts with PurQ and PurL and is thought to assist in the transfer of the ammonia molecule from PurQ to PurL. The polypeptide is Phosphoribosylformylglycinamidine synthase subunit PurQ (Bacillus cereus (strain Q1)).